A 91-amino-acid polypeptide reads, in one-letter code: Small ribosomal subunit protein bS16 (91 aa).

The protein belongs to the bacterial ribosomal protein bS16 family.

This is Small ribosomal subunit protein bS16 from Lacticaseibacillus casei (strain BL23) (Lactobacillus casei).